The sequence spans 589 residues: ATP-dependent lipid A-core flippase (589 aa).

5 helical membrane passes run 29 to 49, 70 to 90, 157 to 177, 261 to 281, and 283 to 303; these read LLLV…TGFL, WLPV…YITD, VIGA…TILV, MIGA…ALAG, and LTAG…PGLK. An ABC transmembrane type-1 domain is found at 32–314; the sequence is VAALIAALIE…LTNVQNMVQR (283 aa). Residues 346–582 form the ABC transporter domain; it reads IEFRDVTARY…GGLYSHLHGM (237 aa). 380–387 is an ATP binding site; that stretch reads GRSGSGKS.

It belongs to the ABC transporter superfamily. Lipid exporter (TC 3.A.1.106) family. Homodimer.

The protein resides in the cell inner membrane. The catalysed reaction is ATP + H2O + lipid A-core oligosaccharideSide 1 = ADP + phosphate + lipid A-core oligosaccharideSide 2.. Functionally, involved in lipopolysaccharide (LPS) biosynthesis. Translocates lipid A-core from the inner to the outer leaflet of the inner membrane. Transmembrane domains (TMD) form a pore in the inner membrane and the ATP-binding domain (NBD) is responsible for energy generation. The chain is ATP-dependent lipid A-core flippase from Xanthomonas campestris pv. campestris (strain 8004).